Reading from the N-terminus, the 301-residue chain is Nucleotide-binding protein Helmi_06460 (301 aa).

17–24 (GLSGAGKS) is an ATP binding site. 68-71 (DIRG) is a binding site for GTP.

The protein belongs to the RapZ-like family.

Functionally, displays ATPase and GTPase activities. In Heliobacterium modesticaldum (strain ATCC 51547 / Ice1), this protein is Nucleotide-binding protein Helmi_06460.